We begin with the raw amino-acid sequence, 473 residues long: UDP-N-acetylmuramoylalanine--D-glutamate ligase (473 aa).

Position 120 to 126 (120 to 126 (GSNGKTT)) interacts with ATP.

The protein belongs to the MurCDEF family.

It localises to the cytoplasm. It catalyses the reaction UDP-N-acetyl-alpha-D-muramoyl-L-alanine + D-glutamate + ATP = UDP-N-acetyl-alpha-D-muramoyl-L-alanyl-D-glutamate + ADP + phosphate + H(+). It functions in the pathway cell wall biogenesis; peptidoglycan biosynthesis. In terms of biological role, cell wall formation. Catalyzes the addition of glutamate to the nucleotide precursor UDP-N-acetylmuramoyl-L-alanine (UMA). The polypeptide is UDP-N-acetylmuramoylalanine--D-glutamate ligase (Nitrosospira multiformis (strain ATCC 25196 / NCIMB 11849 / C 71)).